A 117-amino-acid polypeptide reads, in one-letter code: Eukaryotic translation initiation factor 4E-binding protein (117 aa).

Residues Thr37 and Thr46 each carry the phosphothreonine modification. The short motif at 54–60 (YERAFMK) is the YXXXXLphi motif; atypical element. Ser65 bears the Phosphoserine mark. Thr70 is modified (phosphothreonine).

This sequence belongs to the eIF4E-binding protein family. Hypophosphorylated Thor/4E-BP competes with eIF4G1 to interact with eIF4E1; insulin stimulated Akt1 or Tor phosphorylation of Thor/4E-BP causes dissociation of the complex allowing eIF4G1 to bind and consequent initiation of translation. In terms of processing, phosphorylation at Thr-37, Thr-46, Ser-65 and Thr-70, corresponding to the hyperphosphorylated form, impairs its ability to prevent the interaction between eIF4G1 and eIF4E1, without affecting its interaction with free eIF4E1. Phosphorylated in rtesponse to insulin. Phosphorylation at Thr-46 is regulated by Tor and constitutes the major phosphorylation event that regulates activity. In terms of tissue distribution, widely expressed.

Repressor of translation initiation that regulates eIF4E1 activity by preventing its assembly into the eIF4F complex. Hypophosphorylated form competes with eIF4G1 and strongly binds to eIF4E1, leading to repress translation. In contrast, hyperphosphorylated form dissociates from eIF4E1, allowing interaction between eIF4G1 and eIF4E1, leading to initiation of translation. Acts as a regulator of various biological processes, such as innate immunity, cell growth or synaptic transmission. Acts downstream of phosphoinositide-3-kinase (PI3K) to regulate cell growth. Extends lifespan upon dietary restriction by regulating the mitochondrial translation. Acts as a regulator of lifespan in response to cold by regulating the mitochondrial translation. Acts as a negative regulator of presynaptic release of neurotransmitter in motor neurons: Thor expression is induced in response to insulin signaling, leading to prevent of translation of complexin (cpx), a protein known to regulate the exocytosis of synaptic vesicles. Acts as a negative regulator of synaptic strength at the neuromuscular junction: Thor expression in response to acute fasting prevents translation, thereby suppressing retrograde synaptic enhancement. The protein is Eukaryotic translation initiation factor 4E-binding protein of Drosophila melanogaster (Fruit fly).